We begin with the raw amino-acid sequence, 427 residues long: Adenylosuccinate synthetase (427 aa).

GTP-binding positions include 11–17 and 39–41; these read GDEGKGK and GHT. Aspartate 12 functions as the Proton acceptor in the catalytic mechanism. Aspartate 12 and glycine 39 together coordinate Mg(2+). IMP contacts are provided by residues 12–15, 37–40, threonine 132, arginine 146, glutamine 223, threonine 238, and arginine 302; these read DEGK and NAGH. Residue histidine 40 is the Proton donor of the active site. 298 to 304 is a binding site for substrate; it reads TTTGRPR. Residues arginine 304, 330–332, and 412–414 contribute to the GTP site; these read KLD and GVG.

Belongs to the adenylosuccinate synthetase family. Homodimer. Mg(2+) serves as cofactor.

It localises to the cytoplasm. The enzyme catalyses IMP + L-aspartate + GTP = N(6)-(1,2-dicarboxyethyl)-AMP + GDP + phosphate + 2 H(+). The protein operates within purine metabolism; AMP biosynthesis via de novo pathway; AMP from IMP: step 1/2. Its function is as follows. Plays an important role in the de novo pathway and in the salvage pathway of purine nucleotide biosynthesis. Catalyzes the first committed step in the biosynthesis of AMP from IMP. The polypeptide is Adenylosuccinate synthetase (purA) (Dictyostelium discoideum (Social amoeba)).